Consider the following 235-residue polypeptide: Claudin-16 (235 aa).

Residues 1–3 (MKD) lie on the Cytoplasmic side of the membrane. Residues 4 to 24 (LLQYAACFLAIFSTGFLIVAT) traverse the membrane as a helical segment. At 25–79 (WTDCWMVNADDSLEVSTKCRGLWWECVTNAFDGIRTCDEYDSIYAEHPLKLVVTR) the chain is on the extracellular side. Residues 80–100 (ALMITADILAGFGFITLLLGL) form a helical membrane-spanning segment. Over 101-115 (DCVKFLPDDPQIKVR) the chain is Cytoplasmic. Residues 116 to 136 (LCFVAGTTLLIAGTPGIIGSV) traverse the membrane as a helical segment. Residues 137-169 (WYAVDVYVERSSLVLHNIFLGIQYKFGWSCWLG) are Extracellular-facing. Residues 170–190 (MAGSLGCFLAGALLTCCLYLF) form a helical membrane-spanning segment. At 191-235 (KDVGPERNYPYAMRKPYSTAGVSMAKSYKAPRTETAKMYAVDTRV) the chain is on the cytoplasmic side. The short motif at 233 to 235 (TRV) is the Interaction with TJP1 element.

It belongs to the claudin family. In terms of assembly, can form heteropolymeric tight junction strands with other claudins. Interacts with CLDN19. Cannot form tight junction strands on its own. Interacts (via PDZ-binding motif TRV) with TJP1 (via PDZ domain). In terms of tissue distribution, expressed in the corticomedullary axis of the TAL, specifically in the cortex and the outer stripe of outer medulla (OSOM) zone (at protein level).

It is found in the cell junction. The protein resides in the tight junction. The protein localises to the cell membrane. It carries out the reaction Mg(2+)(in) = Mg(2+)(out). The enzyme catalyses Ca(2+)(in) = Ca(2+)(out). It catalyses the reaction Na(+)(in) = Na(+)(out). The catalysed reaction is K(+)(in) = K(+)(out). It carries out the reaction Rb(+)(in) = Rb(+)(out). The enzyme catalyses Cs(+)(in) = Cs(+)(out). It catalyses the reaction Li(+)(in) = Li(+)(out). In terms of biological role, forms paracellular channels: coassembles with CLDN19 into tight junction strands with cation-selective channels through the strands, conveying epithelial permeability in a process known as paracellular tight junction permeability. Involved in the maintenance of ion gradients along the nephron. In the thick ascending limb (TAL) of Henle's loop, facilitates sodium paracellular permeability from the interstitial compartment to the lumen, contributing to the lumen-positive transepithelial potential that drives paracellular magnesium and calcium reabsorption. This chain is Claudin-16, found in Mus musculus (Mouse).